Consider the following 188-residue polypeptide: Elongation factor P (188 aa).

The protein belongs to the elongation factor P family.

It localises to the cytoplasm. It participates in protein biosynthesis; polypeptide chain elongation. In terms of biological role, involved in peptide bond synthesis. Stimulates efficient translation and peptide-bond synthesis on native or reconstituted 70S ribosomes in vitro. Probably functions indirectly by altering the affinity of the ribosome for aminoacyl-tRNA, thus increasing their reactivity as acceptors for peptidyl transferase. In Leptospira interrogans serogroup Icterohaemorrhagiae serovar copenhageni (strain Fiocruz L1-130), this protein is Elongation factor P.